Here is a 274-residue protein sequence, read N- to C-terminus: Imidazole glycerol phosphate synthase subunit HisF (274 aa).

Active-site residues include Asp11 and Asp134.

The protein belongs to the HisA/HisF family. Heterodimer of HisH and HisF.

It localises to the cytoplasm. It carries out the reaction 5-[(5-phospho-1-deoxy-D-ribulos-1-ylimino)methylamino]-1-(5-phospho-beta-D-ribosyl)imidazole-4-carboxamide + L-glutamine = D-erythro-1-(imidazol-4-yl)glycerol 3-phosphate + 5-amino-1-(5-phospho-beta-D-ribosyl)imidazole-4-carboxamide + L-glutamate + H(+). Its pathway is amino-acid biosynthesis; L-histidine biosynthesis; L-histidine from 5-phospho-alpha-D-ribose 1-diphosphate: step 5/9. Its function is as follows. IGPS catalyzes the conversion of PRFAR and glutamine to IGP, AICAR and glutamate. The HisF subunit catalyzes the cyclization activity that produces IGP and AICAR from PRFAR using the ammonia provided by the HisH subunit. The polypeptide is Imidazole glycerol phosphate synthase subunit HisF (Methanosphaera stadtmanae (strain ATCC 43021 / DSM 3091 / JCM 11832 / MCB-3)).